A 235-amino-acid polypeptide reads, in one-letter code: Protein CIST1 (235 aa).

The N-terminal stretch at 1-31 (MASSQPPLPPPPPPLLLLALLLLLKVSDTSS) is a signal peptide. Low complexity-rich tracts occupy residues 28 to 61 (DTSS…SSPT) and 76 to 110 (STSH…SQPE). Residues 28–159 (DTSSSVSTAT…TGPPSVSLAT (132 aa)) form a disordered region. At 32–184 (SVSTATSTAS…GVPRLHRNPG (153 aa)) the chain is on the extracellular side. Residue N45 is glycosylated (N-linked (GlcNAc...) asparagine). The segment covering 114–136 (HPSSGSPSSEHTVTSPSLGSVSL) has biased composition (polar residues). The chain crosses the membrane as a helical span at residues 185 to 205 (VVVAVCLLVSALLIGGAIMAV). The Cytoplasmic portion of the chain corresponds to 206 to 235 (RRCHNGVSEFQKLDEGLVSRRSSSAHHTLP).

Highly expressed in large intestine, small intestine, rumen, and kidney tissues.

It localises to the membrane. In Bos taurus (Bovine), this protein is Protein CIST1 (CIST1).